The sequence spans 517 residues: Cytochrome P450 monooxygenase sdnE (517 aa).

Residues 4 to 24 traverse the membrane as a helical segment; that stretch reads SSILQTLAVLYVLYLLGLIIY. N-linked (GlcNAc...) asparagine glycosylation is present at asparagine 111. Residues 219-239 traverse the membrane as a helical segment; that stretch reads FPVVFIILGLSPRAMLKLVVP. Cysteine 456 is a heme binding site.

Belongs to the cytochrome P450 family. The cofactor is heme.

The protein localises to the membrane. Its pathway is antibiotic biosynthesis. Cytochrome P450 monooxygenase; part of the gene cluster that mediates the biosynthesis of sordarin and hypoxysordarin, glycoside antibiotics with a unique tetracyclic diterpene aglycone structure. First, the geranylgeranyl diphosphate synthase sdnC constructs GGDP from farnesyl diphosphate and isopentenyl diphosphate. The diterpene cyclase sdnA then catalyzes the cyclization of GGDP to afford cycloaraneosene. Cycloaraneosene is then hydroxylated four times by the putative cytochrome P450 monooxygenases sdnB, sdnE, sdnF and sdnH to give a hydroxylated cycloaraneosene derivative such as cycloaraneosene-8,9,13,19-tetraol. Although the order of the hydroxylations is unclear, at least C8, C9 and C13 of the cycloaraneosene skeleton are hydroxylated before the sordaricin formation. Dehydration of the 13-hydroxy group of the hydroxylated cycloaraneosene derivative might be catalyzed by an unassigned hypothetical protein such as sdnG and sdnP to construct the cyclopentadiene moiety. The FAD-dependent oxidoreductase sdnN is proposed to catalyze the oxidation at C9 of the hydroxylated cycloaraneosene derivative and also catalyze the Baeyer-Villiger oxidation to give the lactone intermediate. The presumed lactone intermediate would be hydrolyzed to give an acrolein moiety and a carboxylate moiety. Then, [4+2]cycloaddition would occur between the acrolein moiety and the cyclopentadiene moiety to give sordaricin. SdnN might also be involved in the [4+2]cycloaddition after the hypothesized oxidation to accommodate the oxidized product and prompt the [4+2]cycloaddition. GDP-6-deoxy-D-altrose may be biosynthesized from GDP-D-mannose by the putative GDP-mannose-4,6-dehydratase sdnI and the short-chain dehydrogenase sdnK. The glycosyltransferase sdnJ catalyzes the attachment of 6-deoxy-D-altrose onto the 19-hydroxy group of sordaricin to give 4'-O-demethylsordarin. The methyltransferase sdnD would complete the biosynthesis of sordarin. Sordarin can be further modified into hypoxysordarin. The unique acyl chain at the 3'-hydroxy group of hypoxysordarin would be constructed by an iterative type I PKS sdnO and the trans-acting polyketide methyltransferase sdnL. SdnL would be responsible for the introduction of an alpha-methyl group of the polyketide chain. Alternatively, the beta-lactamase-like protein sdnR might be responsible for the cleavage and transfer of the polyketide chain from the PKS sdnO to sordarin. Two putative cytochrome P450 monooxygenases, sdnQ and sdnT, might catalyze the epoxidations of the polyketide chain to complete the biosynthesis of hypoxysordarin. Transcriptional regulators sdnM and sdnS are presumably encoded for the transcriptional regulation of the expression of the sdn gene cluster. In Sordaria araneosa (Pleurage araneosa), this protein is Cytochrome P450 monooxygenase sdnE.